Consider the following 93-residue polypeptide: Small ribosomal subunit protein bS20 (93 aa).

A compositionally biased stretch (basic and acidic residues) spans 1-11 (MPQHKSAEKRV). Residues 1–23 (MPQHKSAEKRVRQSKRRNARNRV) are disordered. The segment covering 12 to 23 (RQSKRRNARNRV) has biased composition (basic residues).

This sequence belongs to the bacterial ribosomal protein bS20 family.

Its function is as follows. Binds directly to 16S ribosomal RNA. The polypeptide is Small ribosomal subunit protein bS20 (Chloroherpeton thalassium (strain ATCC 35110 / GB-78)).